A 335-amino-acid polypeptide reads, in one-letter code: Glucokinase (335 aa).

11–16 is a binding site for ATP; the sequence is ADIGGT.

Belongs to the bacterial glucokinase family.

It is found in the cytoplasm. It carries out the reaction D-glucose + ATP = D-glucose 6-phosphate + ADP + H(+). This is Glucokinase from Xanthomonas axonopodis pv. citri (strain 306).